Here is a 178-residue protein sequence, read N- to C-terminus: Protein GrpE (178 aa).

Belongs to the GrpE family. Homodimer.

The protein resides in the cytoplasm. Functionally, participates actively in the response to hyperosmotic and heat shock by preventing the aggregation of stress-denatured proteins, in association with DnaK and GrpE. It is the nucleotide exchange factor for DnaK and may function as a thermosensor. Unfolded proteins bind initially to DnaJ; upon interaction with the DnaJ-bound protein, DnaK hydrolyzes its bound ATP, resulting in the formation of a stable complex. GrpE releases ADP from DnaK; ATP binding to DnaK triggers the release of the substrate protein, thus completing the reaction cycle. Several rounds of ATP-dependent interactions between DnaJ, DnaK and GrpE are required for fully efficient folding. The chain is Protein GrpE from Rickettsia africae (strain ESF-5).